A 279-amino-acid chain; its full sequence is uncharacterized protein (279 aa).

The interval 60–92 (RKANKLNNKQDSTFFNSASGETNNTILPPGVKN) is disordered. Residues 70–85 (DSTFFNSASGETNNTI) show a composition bias toward polar residues. The next 3 helical transmembrane spans lie at 156–176 (IVGYTNLVIVAFFAGLLAVMN), 202–222 (ISIFVISIVTLPFWTMFILFL), and 237–257 (FIWIVLIINVVLLLVSCLLMI).

It is found in the cell membrane. This is an uncharacterized protein from Mycoplasma genitalium (strain ATCC 33530 / DSM 19775 / NCTC 10195 / G37) (Mycoplasmoides genitalium).